A 248-amino-acid chain; its full sequence is Small ribosomal subunit protein uS3 (248 aa).

The KH type-2 domain occupies 39–111 (IRKYLNKVYK…EIVFNVVEVK (73 aa)). Residues 222 to 248 (KPFEASAPRPQRRNRKEANNYVNAKKN) are disordered.

It belongs to the universal ribosomal protein uS3 family. In terms of assembly, part of the 30S ribosomal subunit. Forms a tight complex with proteins S10 and S14.

Functionally, binds the lower part of the 30S subunit head. Binds mRNA in the 70S ribosome, positioning it for translation. This Alteracholeplasma palmae (strain ATCC 49389 / J233) (Acholeplasma palmae) protein is Small ribosomal subunit protein uS3.